The following is a 199-amino-acid chain: Pyridoxal 5'-phosphate synthase subunit PdxT (199 aa).

An L-glutamine-binding site is contributed by 52–54 (GES). The Nucleophile role is filled by Cys-84. L-glutamine-binding positions include Arg-115 and 143–144 (IR). Residues His-179 and Glu-181 each act as charge relay system in the active site.

It belongs to the glutaminase PdxT/SNO family. In terms of assembly, in the presence of PdxS, forms a dodecamer of heterodimers. Only shows activity in the heterodimer.

The enzyme catalyses aldehydo-D-ribose 5-phosphate + D-glyceraldehyde 3-phosphate + L-glutamine = pyridoxal 5'-phosphate + L-glutamate + phosphate + 3 H2O + H(+). It catalyses the reaction L-glutamine + H2O = L-glutamate + NH4(+). It participates in cofactor biosynthesis; pyridoxal 5'-phosphate biosynthesis. Its function is as follows. Catalyzes the hydrolysis of glutamine to glutamate and ammonia as part of the biosynthesis of pyridoxal 5'-phosphate. The resulting ammonia molecule is channeled to the active site of PdxS. This Methanosarcina acetivorans (strain ATCC 35395 / DSM 2834 / JCM 12185 / C2A) protein is Pyridoxal 5'-phosphate synthase subunit PdxT.